The primary structure comprises 296 residues: MIDKLKTETRNQATMALDSMPIHDILKAMNREDGKVPTAIATQLPQIEKAVKLVIASFQQGGRLIYAGAGTSGRLGVLDAVECKPTFGVSPEMVRGVIAGGEQAFTEAVEGAEDDERAGANDCNRLNIGEKDTVIALAASGRTPYAIGVLKEAEARGANTVSIACNKEAKMSQYASVAIEVETGPEVLTGSTRLKAGTAQKLILNMISTTAMVGIGKVYQNLMVDVQPTNQKLVERAKRIIMEATDSTYETAADYYQKANGHVKAAIVMILLDCSYDEALTKLQNAKGFIRKTVDK.

In terms of domain architecture, SIS spans 54 to 217; sequence VIASFQQGGR…STTAMVGIGK (164 aa). The active-site Proton donor is the glutamate 82. The active site involves glutamate 113.

Belongs to the GCKR-like family. MurNAc-6-P etherase subfamily. As to quaternary structure, homodimer.

It carries out the reaction N-acetyl-D-muramate 6-phosphate + H2O = N-acetyl-D-glucosamine 6-phosphate + (R)-lactate. It participates in amino-sugar metabolism; N-acetylmuramate degradation. In terms of biological role, specifically catalyzes the cleavage of the D-lactyl ether substituent of MurNAc 6-phosphate, producing GlcNAc 6-phosphate and D-lactate. The chain is N-acetylmuramic acid 6-phosphate etherase from Shouchella clausii (strain KSM-K16) (Alkalihalobacillus clausii).